The chain runs to 271 residues: uncharacterized protein (271 aa).

Disordered regions lie at residues 50 to 93 (KKKT…SSSL) and 128 to 233 (KNNY…RKKV). 2 stretches are compositionally biased toward low complexity: residues 61–93 (SPTKPLSTSIPTTTTAATSQSITSTSLSSSSSL) and 129–165 (NNYNNYNNNNNNNNNNNNNNNNNNNNNNNNNNNNNNN). Residues 169 to 179 (TDKKEGEKNEN) show a composition bias toward basic and acidic residues. Composition is skewed to acidic residues over residues 180 to 199 (ENENENENENENENENDIIE) and 207 to 217 (MDEELENEQVE).

This is an uncharacterized protein from Dictyostelium discoideum (Social amoeba).